The chain runs to 432 residues: MGLSTVYSPAGPRLVPAPLGRCRSAQPRRPRRAPLATVRCSVDATKQAQDGVATAVATEAPASRKECFGVFCTTYDLKAEDKTKSWRKLVNVAVSGAAGMISNHLLFKLASGEVFGQDQPIALKLLGSERSFQALEGVAMELEDSLYPLLREVSIGIDPYVVFQDVDWALLIGAKPRGPGMERAALLDINGQIFADQGKALNAVASRNDEVLVVGNPCNTNALICLKNAPNIPAKNFHALTRLDENRAKCQLALKAGVFYDKVSNVTIWGNHSTTQVPDFLNAKIDGRPVKEVIKDTKWLEEEFTLTVQKRGGVLIQKWGRSSAASTAVSIVDAIRSLVTPTPEGDWFSTGVYTTGNPYGIAEDIVFSMPCRSKGDGDYELASDVLMDDFLWERIKKSEAELLAEKKCVAHLTGEGNAFCDLPEDTMLPGEV.

The N-terminal 40 residues, 1–40, are a transit peptide targeting the chloroplast; that stretch reads MGLSTVYSPAGPRLVPAPLGRCRSAQPRRPRRAPLATVRC. The segment at 18-37 is disordered; sequence PLGRCRSAQPRRPRRAPLAT. A disulfide bridge links Cys67 with Cys72. NADP(+) is bound at residue 96-102; it reads GAAGMIS. The substrate site is built by Arg177 and Arg183. Residue Asn190 coordinates NADP(+). Position 197 (Gln197) interacts with NAD(+). An NADP(+)-binding site is contributed by 214–216; sequence VGN. Residues Asn216 and Arg247 each contribute to the substrate site. Catalysis depends on His272, which acts as the Proton acceptor. Cys408 and Cys420 are disulfide-bonded.

This sequence belongs to the LDH/MDH superfamily. MDH type 2 family. As to quaternary structure, homodimer.

It is found in the plastid. Its subcellular location is the chloroplast. It carries out the reaction (S)-malate + NADP(+) = oxaloacetate + NADPH + H(+). Chloroplast NADP-MDH is activated upon illumination. In order to be enzymatically active, disulfide bridges on the protein must be reduced by thioredoxin which receives electrons from ferredoxin and the electron transport system of photosynthesis. The chloroplastic, NADP-dependent form is essential for the photosynthesis C4 cycle, which allows plants to circumvent the problem of photorespiration. In C4 plants, NADP-MDH activity acts to convert oxaloacetate to malate in chloroplasts of mesophyll cells for transport to the bundle sheath cells. The chain is Malate dehydrogenase [NADP], chloroplastic from Zea mays (Maize).